Reading from the N-terminus, the 316-residue chain is MATELSDAEKRKLLRERRQQKFSNGGASSRLNKITGQQQNSFLSSTSVLDEPKVTPSGNKKSSNVSDEEVEKSTKEIQDLLSSIPGNKDNSETDAAETNPEVALFQQLLKMQQQGGGFQNGSPDASTPDLFSSLLNNDTNTTASATQMLPNFVDEKVLKYYKFKVSKLKSYIILIKWALLAPYVYFIMHPNPTVLQASNLLSQIVERSNFFSIFTGLEIVFISIYYQMLKKLQRDNNVTATQNAGGILKYLTMIPEGILPIRNIQGKIGLALEYFDVASMYVTDICFVLVLFGVMKYYHSSFPISVPIEPPIAGIQ.

Positions 1–75 (MATELSDAEK…SDEEVEKSTK (75 aa)) are disordered. Topologically, residues 1 to 167 (MATELSDAEK…LKYYKFKVSK (167 aa)) are cytoplasmic. Over residues 7 to 19 (DAEKRKLLRERRQ) the composition is skewed to basic and acidic residues. Composition is skewed to polar residues over residues 22–48 (FSNG…STSV) and 56–65 (PSGNKKSSNV). Residues 168–187 (LKSYIILIKWALLAPYVYFI) traverse the membrane as a helical segment. Topologically, residues 188–209 (MHPNPTVLQASNLLSQIVERSN) are lumenal. The chain crosses the membrane as a helical span at residues 210 to 229 (FFSIFTGLEIVFISIYYQML). Topologically, residues 230-276 (KKLQRDNNVTATQNAGGILKYLTMIPEGILPIRNIQGKIGLALEYFD) are cytoplasmic. Residues 277–297 (VASMYVTDICFVLVLFGVMKY) traverse the membrane as a helical segment. The Lumenal segment spans residues 298–316 (YHSSFPISVPIEPPIAGIQ).

It belongs to the GET2 family. In terms of assembly, component of the Golgi to ER traffic (GET) complex, which is composed of GET1, GET2 and GET3. Within the complex, GET1 and GET2 form a heterotetramer which is stabilized by phosphatidylinositol binding and which binds to the GET3 homodimer.

The protein localises to the endoplasmic reticulum membrane. Its subcellular location is the golgi apparatus membrane. Functionally, required for the post-translational delivery of tail-anchored (TA) proteins to the endoplasmic reticulum. Together with GET1, acts as a membrane receptor for soluble GET3, which recognizes and selectively binds the transmembrane domain of TA proteins in the cytosol. The GET complex cooperates with the HDEL receptor ERD2 to mediate the ATP-dependent retrieval of resident ER proteins that contain a C-terminal H-D-E-L retention signal from the Golgi to the ER. The polypeptide is Golgi to ER traffic protein 2 (Kluyveromyces lactis (strain ATCC 8585 / CBS 2359 / DSM 70799 / NBRC 1267 / NRRL Y-1140 / WM37) (Yeast)).